A 263-amino-acid polypeptide reads, in one-letter code: E3 ubiquitin-protein ligase SINA-like 8 (263 aa).

The RING-type; degenerate zinc-finger motif lies at 35–71; sequence CPICCEGLTCPIFQCENGHLACSSCCPKLRNKCPACP. The segment at 75–261 is SBD; the sequence is ILESILVTCP…IKLSIVETSN (187 aa). An SIAH-type zinc finger spans residues 78–136; it reads SILVTCPNDMFGCTESFLYGKKSTHEEECIFSLCSCPSLDCEYSGRYEDLYDHYKLTHI. Zn(2+)-binding residues include Cys-83, Cys-90, His-102, Cys-106, Cys-113, Cys-118, His-130, and His-135.

Belongs to the SINA (Seven in absentia) family.

It catalyses the reaction S-ubiquitinyl-[E2 ubiquitin-conjugating enzyme]-L-cysteine + [acceptor protein]-L-lysine = [E2 ubiquitin-conjugating enzyme]-L-cysteine + N(6)-ubiquitinyl-[acceptor protein]-L-lysine.. It functions in the pathway protein modification; protein ubiquitination. Its function is as follows. E3 ubiquitin-protein ligase that mediates ubiquitination and subsequent proteasomal degradation of target proteins. E3 ubiquitin ligases accept ubiquitin from an E2 ubiquitin-conjugating enzyme in the form of a thioester and then directly transfers the ubiquitin to targeted substrates. It probably triggers the ubiquitin-mediated degradation of different substrates. This Arabidopsis thaliana (Mouse-ear cress) protein is E3 ubiquitin-protein ligase SINA-like 8.